Reading from the N-terminus, the 512-residue chain is FAD-dependent monooxygenase prx3 (512 aa).

An N-terminal signal peptide occupies residues 1–19 (MLSLKAFLALSLSIHLSQG). The FAD-binding PCMH-type domain occupies 63–235 (CQTTPTCVFA…TRFDLATFSV (173 aa)). Position 100 is a pros-8alpha-FAD histidine (His-100). 6 N-linked (GlcNAc...) asparagine glycosylation sites follow: Asn-197, Asn-281, Asn-307, Asn-329, Asn-361, and Asn-477.

This sequence belongs to the oxygen-dependent FAD-linked oxidoreductase family.

It functions in the pathway sesquiterpene biosynthesis. In terms of biological role, FAD-dependent monooxygenase; part of the gene cluster that mediates the biosynthesis of PR-toxin, a bicyclic sesquiterpene belonging to the eremophilane class and acting as a mycotoxin. The first step of the pathway is catalyzed by the aristolochene synthase which performs the cyclization of trans,trans-farnesyl diphosphate (FPP) to the bicyclic sesquiterpene aristolochene. Following the formation of aristolochene, the non-oxygenated aristolochene is converted to the trioxygenated intermediate eremofortin B, via 7-epi-neopetasone. This conversion appears to involve three enzymes, a hydroxysterol oxidase-like enzyme, the quinone-oxidase prx3 that forms the quinone-type-structure in the bicyclic nucleus of aristolochene with the C8-oxo group and the C-3 hydroxyl group, and the P450 monooxygenase ORF6 that introduces the epoxide at the double bond between carbons 1 and 2. No monoxy or dioxy-intermediates have been reported to be released to the broth, so these three early oxidative reactions may be coupled together. Eremofortin B is further oxidized by another P450 monooxygenase, that introduces a second epoxide between carbons 7 and 11 prior to acetylation to eremofortin A by the acetyltransferase ORF8. The second epoxidation may be performed by a second P450 monooxygenase. After the acetylation step, eremofortin A is converted to eremofortin C and then to PR-toxin. First the conversion of eremofortin A to eremofortin C proceeds by oxidation of the side chain of the molecule at C-12 and is catalyzed by the short-chain oxidoreductase prx1. The cytochrome P450 monooxygenase ORF6 is probably also involved in this step. The primary alcohol formed at C-12 is finally oxidized by the short-chain alcohol dehydrogenase prx4 that forms PR-toxin. The polypeptide is FAD-dependent monooxygenase prx3 (Penicillium roqueforti (strain FM164)).